The following is a 242-amino-acid chain: 2-C-methyl-D-erythritol 4-phosphate cytidylyltransferase (242 aa).

It belongs to the IspD/TarI cytidylyltransferase family. IspD subfamily.

The catalysed reaction is 2-C-methyl-D-erythritol 4-phosphate + CTP + H(+) = 4-CDP-2-C-methyl-D-erythritol + diphosphate. Its pathway is isoprenoid biosynthesis; isopentenyl diphosphate biosynthesis via DXP pathway; isopentenyl diphosphate from 1-deoxy-D-xylulose 5-phosphate: step 2/6. In terms of biological role, catalyzes the formation of 4-diphosphocytidyl-2-C-methyl-D-erythritol from CTP and 2-C-methyl-D-erythritol 4-phosphate (MEP). This chain is 2-C-methyl-D-erythritol 4-phosphate cytidylyltransferase, found in Shewanella loihica (strain ATCC BAA-1088 / PV-4).